Here is a 604-residue protein sequence, read N- to C-terminus: Elongation factor 4 (604 aa).

Residues serine 7 to serine 189 enclose the tr-type G domain. Residues aspartate 19–threonine 24 and asparagine 136–aspartate 139 contribute to the GTP site.

It belongs to the TRAFAC class translation factor GTPase superfamily. Classic translation factor GTPase family. LepA subfamily.

Its subcellular location is the cell inner membrane. The catalysed reaction is GTP + H2O = GDP + phosphate + H(+). Functionally, required for accurate and efficient protein synthesis under certain stress conditions. May act as a fidelity factor of the translation reaction, by catalyzing a one-codon backward translocation of tRNAs on improperly translocated ribosomes. Back-translocation proceeds from a post-translocation (POST) complex to a pre-translocation (PRE) complex, thus giving elongation factor G a second chance to translocate the tRNAs correctly. Binds to ribosomes in a GTP-dependent manner. In Synechococcus sp. (strain ATCC 27144 / PCC 6301 / SAUG 1402/1) (Anacystis nidulans), this protein is Elongation factor 4.